We begin with the raw amino-acid sequence, 485 residues long: G2/mitotic-specific cyclin-A1 (485 aa).

The segment at 1–24 (MRSALSLKPSNGNAAKSQAVNNKN) is disordered. Residues 8-24 (KPSNGNAAKSQAVNNKN) show a composition bias toward polar residues.

Belongs to the cyclin family. Cyclin AB subfamily. In terms of tissue distribution, expressed in the cell lineages ABarp, C and E as well as the NSM neuroblasts.

Functionally, involved in the control of the cell cycle after S phase. May bind to and activate cdk-1 and/or cdk-2 to promote cell cycle progression. Necessary for embryogenesis. This chain is G2/mitotic-specific cyclin-A1 (cya-1), found in Caenorhabditis elegans.